The primary structure comprises 836 residues: MVGLISTSETLPKQESKSSSAPVSNFLSPNNLTEQTCSPLRAHSTFKEPVFLLSQRQYSHNSKILTELINSVKRPNKPDQNEEKSAVGIEEKSFKDEHLAQKKGLHHFADLKEIFLNKNLSTLDGLQDASLHDNIQSGKLDNPVISQNRRIVLEKLANPNSSKEYETIPTVENRHPLNKLSKTKTLAYEETINQLDETPGGTNYPMNKKKTLSSETNKYEYPQQSKFHECSQFASPRSSIVNGPRTLGKNSKRADDTARMASRMKPSNFNNNIQSSSYGHASQSTKLTSQRDNDHQKDLNFSPYKSIPLNNRPYSPMSEIVGFSGSTTPLDTYGNRPSGKKFNKNSKFRPPGSTISSYSSASTLRRLPRAPGSKVHAERQNSTFNSGISLRALRKEMGNTAPVSSNQLLKDADLVMENLSTRNTEKVLREVNILKRLRESCVAITAKSYDTLDERKIRSLTTFEYLEIKNFQKIYFTGSENCQKLSKQIPLDECNEALFDDDNGDYKAIQGDHLLYRYEIIDTVGKGSFGQVLKCIDHKRGQVVAIKVIKNRQKFHGQTLVEVGILKRLCEADPADKNNVIRYLSHFDFRGHLCIVTELLGSNLFDVIRENNYKGLPLIVVKSFALQGLQALRLLQGQNIIHCDLKPENLLLSHPLKARIKLIDFGSSCFYNEKVYTYLQSRFYRAPEIILGLEYGKEIDIWSFGCILAELFTGVPLFPGGNETEQLGYIMEVLGPPPMALIRNSTRSKAYFDSEGKPHPITDSHNRLLVPSTRTFSQLLNTKQASFLDFLSKCLKWDPKDRITVDSALQHEFILGKTSQKPMVSKGSHPLPDLPV.

Disordered regions lie at residues 1–29, 192–214, 230–307, and 328–381; these read MVGL…FLSP, INQL…TLSS, CSQF…YKSI, and TPLD…ERQN. 3 stretches are compositionally biased toward polar residues: residues 192–205, 232–241, and 265–288; these read INQL…TNYP, QFASPRSSIV, and KPSN…TKLT. Positions 289-298 are enriched in basic and acidic residues; the sequence is SQRDNDHQKD. A compositionally biased stretch (basic residues) spans 338–347; that stretch reads SGKKFNKNSK. Residues 353-362 are compositionally biased toward low complexity; the sequence is STISSYSSAS. The 297-residue stretch at 518–814 folds into the Protein kinase domain; sequence YEIIDTVGKG…VDSALQHEFI (297 aa). ATP is bound by residues 524-532 and Lys-547; that span reads VGKGSFGQV. Asp-644 serves as the catalytic Proton acceptor. Phosphotyrosine is present on Tyr-678.

Belongs to the protein kinase superfamily. CMGC Ser/Thr protein kinase family. MNB/DYRK subfamily.

It localises to the cytoplasm. It catalyses the reaction L-seryl-[protein] + ATP = O-phospho-L-seryl-[protein] + ADP + H(+). It carries out the reaction L-threonyl-[protein] + ATP = O-phospho-L-threonyl-[protein] + ADP + H(+). In terms of biological role, has a role in meiosis. The polypeptide is Serine/threonine-protein kinase ppk5 (ppk5) (Schizosaccharomyces pombe (strain 972 / ATCC 24843) (Fission yeast)).